A 129-amino-acid polypeptide reads, in one-letter code: Small ribosomal subunit protein uS11 (129 aa).

It belongs to the universal ribosomal protein uS11 family. Part of the 30S ribosomal subunit. Interacts with proteins S7 and S18. Binds to IF-3.

Functionally, located on the platform of the 30S subunit, it bridges several disparate RNA helices of the 16S rRNA. Forms part of the Shine-Dalgarno cleft in the 70S ribosome. The sequence is that of Small ribosomal subunit protein uS11 from Buchnera aphidicola subsp. Baizongia pistaciae (strain Bp).